Reading from the N-terminus, the 373-residue chain is Probable tRNA sulfurtransferase (373 aa).

The 105-residue stretch at 54 to 158 folds into the THUMP domain; it reads NKNIEELSKV…NDVAYFYHKI (105 aa). ATP is bound by residues 176-177, 201-202, lysine 256, glycine 278, and glutamine 287; these read LF and NF.

Belongs to the ThiI family.

The protein resides in the cytoplasm. The catalysed reaction is [ThiI sulfur-carrier protein]-S-sulfanyl-L-cysteine + a uridine in tRNA + 2 reduced [2Fe-2S]-[ferredoxin] + ATP + H(+) = [ThiI sulfur-carrier protein]-L-cysteine + a 4-thiouridine in tRNA + 2 oxidized [2Fe-2S]-[ferredoxin] + AMP + diphosphate. It catalyses the reaction [ThiS sulfur-carrier protein]-C-terminal Gly-Gly-AMP + S-sulfanyl-L-cysteinyl-[cysteine desulfurase] + AH2 = [ThiS sulfur-carrier protein]-C-terminal-Gly-aminoethanethioate + L-cysteinyl-[cysteine desulfurase] + A + AMP + 2 H(+). It participates in cofactor biosynthesis; thiamine diphosphate biosynthesis. Functionally, catalyzes the ATP-dependent transfer of a sulfur to tRNA to produce 4-thiouridine in position 8 of tRNAs, which functions as a near-UV photosensor. Also catalyzes the transfer of sulfur to the sulfur carrier protein ThiS, forming ThiS-thiocarboxylate. This is a step in the synthesis of thiazole, in the thiamine biosynthesis pathway. The sulfur is donated as persulfide by IscS. The chain is Probable tRNA sulfurtransferase from Saccharolobus islandicus (strain M.14.25 / Kamchatka #1) (Sulfolobus islandicus).